The primary structure comprises 223 residues: MKPAVVLLSGGLDSATTLAIARREGFACHAMSFDYGQRHGAELKAARRLAQSLGAIEHKTVHIGLDAIGGSALTDLRIAVPDHPQNGIPVTYVPARNTVFLSFALGWAEVLGALDIFIGVNAVDYSGYPDCRPEFIRAFEQLANLATKVGVEGGRFRIHTPLIDLSKADIIRTGTALGIDYAMTVSCYAADAEGLACGVCDSCRLRRQGFEQAGIADPTRYRS.

8 to 18 provides a ligand contact to ATP; that stretch reads LSGGLDSATTL. Zn(2+) contacts are provided by Cys-187, Cys-197, Cys-200, and Cys-203.

The protein belongs to the QueC family. Zn(2+) is required as a cofactor.

It catalyses the reaction 7-carboxy-7-deazaguanine + NH4(+) + ATP = 7-cyano-7-deazaguanine + ADP + phosphate + H2O + H(+). Its pathway is purine metabolism; 7-cyano-7-deazaguanine biosynthesis. In terms of biological role, catalyzes the ATP-dependent conversion of 7-carboxy-7-deazaguanine (CDG) to 7-cyano-7-deazaguanine (preQ(0)). The sequence is that of 7-cyano-7-deazaguanine synthase from Methylococcus capsulatus (strain ATCC 33009 / NCIMB 11132 / Bath).